A 458-amino-acid chain; its full sequence is Bifunctional protein GlmU (458 aa).

A pyrophosphorylase region spans residues 1–229 (MNKFAIVLAA…FDESLGVNDR (229 aa)). Residues 8–11 (LAAG), Lys22, Gln72, and 77–78 (GT) contribute to the UDP-N-acetyl-alpha-D-glucosamine site. Mg(2+) is bound at residue Asp102. UDP-N-acetyl-alpha-D-glucosamine is bound by residues Gly139, Glu154, Asn169, and Asn227. Position 227 (Asn227) interacts with Mg(2+). Positions 230–250 (VALSQAELTMRKRINHQHMVN) are linker. The N-acetyltransferase stretch occupies residues 251–458 (GVTLIDPATT…AKKMPHYRGQ (208 aa)). UDP-N-acetyl-alpha-D-glucosamine contacts are provided by Arg332 and Lys350. The active-site Proton acceptor is the His362. Tyr365 and Asn376 together coordinate UDP-N-acetyl-alpha-D-glucosamine. Residues Ala379, Ser404, Ala422, and Arg439 each coordinate acetyl-CoA.

The protein in the N-terminal section; belongs to the N-acetylglucosamine-1-phosphate uridyltransferase family. In the C-terminal section; belongs to the transferase hexapeptide repeat family. In terms of assembly, homotrimer. The cofactor is Mg(2+).

Its subcellular location is the cytoplasm. The enzyme catalyses alpha-D-glucosamine 1-phosphate + acetyl-CoA = N-acetyl-alpha-D-glucosamine 1-phosphate + CoA + H(+). It carries out the reaction N-acetyl-alpha-D-glucosamine 1-phosphate + UTP + H(+) = UDP-N-acetyl-alpha-D-glucosamine + diphosphate. The protein operates within nucleotide-sugar biosynthesis; UDP-N-acetyl-alpha-D-glucosamine biosynthesis; N-acetyl-alpha-D-glucosamine 1-phosphate from alpha-D-glucosamine 6-phosphate (route II): step 2/2. Its pathway is nucleotide-sugar biosynthesis; UDP-N-acetyl-alpha-D-glucosamine biosynthesis; UDP-N-acetyl-alpha-D-glucosamine from N-acetyl-alpha-D-glucosamine 1-phosphate: step 1/1. It participates in bacterial outer membrane biogenesis; LPS lipid A biosynthesis. In terms of biological role, catalyzes the last two sequential reactions in the de novo biosynthetic pathway for UDP-N-acetylglucosamine (UDP-GlcNAc). The C-terminal domain catalyzes the transfer of acetyl group from acetyl coenzyme A to glucosamine-1-phosphate (GlcN-1-P) to produce N-acetylglucosamine-1-phosphate (GlcNAc-1-P), which is converted into UDP-GlcNAc by the transfer of uridine 5-monophosphate (from uridine 5-triphosphate), a reaction catalyzed by the N-terminal domain. This is Bifunctional protein GlmU from Lactococcus lactis subsp. lactis (strain IL1403) (Streptococcus lactis).